The primary structure comprises 448 residues: Arginine synthetase ArcE (448 aa).

In terms of assembly, probably forms homotetramers and higher assemblies of tetramers. It depends on Mg(2+) as a cofactor.

The catalysed reaction is L-arginine + ADP + phosphate + H(+) = L-citrulline + NH4(+) + ATP. It participates in amino-acid biosynthesis; L-proline biosynthesis. Its pathway is amino-acid degradation; L-arginine degradation. The protein operates within amino-acid biosynthesis; L-arginine biosynthesis. In terms of biological role, arginine deiminase involved in an arginine synthetase pathway, which provides citrulline and ornithine, the precursors for proline biosynthesis. Catalyzes the conversion of L-arginine to citrulline while conserving the energy of arginine deimination to generate ATP from ADP and free phosphate. Is specific toward L-arginine and cannot use D-arginine, agmatine, guanidine, L-alanine-L-arginine dipeptide and L-arginine-L-alanine dipeptide. Can also use CDP, GDP or UDP, with lower activity (38%, 8.4% and 13.3%, respectively). The enzyme can also catalyze the reverse reaction: the ATP-dependent generation of arginine from citrulline in a single reaction by using free ammonia, without the requirement of aspartic acid. In vivo, most likely functions in the arginine catabolism to produce citrulline for proline biosynthesis while also generating ATP, but it can also contribute to arginine biosynthesis when the necessary precursors such as citrulline are abundant. The chain is Arginine synthetase ArcE from Thermococcus kodakarensis (strain ATCC BAA-918 / JCM 12380 / KOD1) (Pyrococcus kodakaraensis (strain KOD1)).